We begin with the raw amino-acid sequence, 121 residues long: Immunoglobulin heavy variable 6-1 (121 aa).

The signal sequence occupies residues 1–20 (MSVSFLIFLPVLGLPWGVLS). Residues 21 to 45 (QVQLQQSGPGLVKPSQTLSLTCAIS) form a framework-1 region. The Ig-like domain maps to 21 to 121 (QVQLQQSGPG…EDTAVYYCAR (101 aa)). Residues C42 and C119 are joined by a disulfide bond. Residues 46-55 (GDSVSSNSAA) form a complementarity-determining-1 region. The tract at residues 56 to 72 (WNWIRQSPSRGLEWLGR) is framework-2. Residues 73–81 (TYYRSKWYN) form a complementarity-determining-2 region. Positions 82 to 119 (DYAVSVKSRITINPDTSKNQFSLQLNSVTPEDTAVYYC) are framework-3. Residues 120-121 (AR) are complementarity-determining-3.

As to quaternary structure, immunoglobulins are composed of two identical heavy chains and two identical light chains; disulfide-linked.

It localises to the secreted. The protein localises to the cell membrane. Its function is as follows. V region of the variable domain of immunoglobulin heavy chains that participates in the antigen recognition. Immunoglobulins, also known as antibodies, are membrane-bound or secreted glycoproteins produced by B lymphocytes. In the recognition phase of humoral immunity, the membrane-bound immunoglobulins serve as receptors which, upon binding of a specific antigen, trigger the clonal expansion and differentiation of B lymphocytes into immunoglobulins-secreting plasma cells. Secreted immunoglobulins mediate the effector phase of humoral immunity, which results in the elimination of bound antigens. The antigen binding site is formed by the variable domain of one heavy chain, together with that of its associated light chain. Thus, each immunoglobulin has two antigen binding sites with remarkable affinity for a particular antigen. The variable domains are assembled by a process called V-(D)-J rearrangement and can then be subjected to somatic hypermutations which, after exposure to antigen and selection, allow affinity maturation for a particular antigen. The polypeptide is Immunoglobulin heavy variable 6-1 (Homo sapiens (Human)).